A 222-amino-acid chain; its full sequence is E3 ubiquitin-protein ligase RNF138 (222 aa).

The RING-type zinc-finger motif lies at 17 to 57; sequence CPVCQEILQTPVRTQTCRHVFCRKCFMLAMKSGGAYCPLCR. Zn(2+) is bound by residues cysteine 85, cysteine 88, histidine 100, and cysteine 104. A C2HC RNF-type zinc finger spans residues 85-104; sequence CMYCGKMMKLHYMKLHYKSC. 2 consecutive C2H2-type zinc fingers follow at residues 134 to 157 and 164 to 192; these read YKCP…NNVH and MVCP…NARH. Residues 202 to 220 enclose the UIM domain; that stretch reads INIDEEAQFQIAVANSYKI.

Interacts with nlk.2 (via C-terminus) and ube2k. Auto-ubiquitinated.

The protein resides in the chromosome. It catalyses the reaction S-ubiquitinyl-[E2 ubiquitin-conjugating enzyme]-L-cysteine + [acceptor protein]-L-lysine = [E2 ubiquitin-conjugating enzyme]-L-cysteine + N(6)-ubiquitinyl-[acceptor protein]-L-lysine.. Its pathway is protein modification; protein ubiquitination. Functionally, E3 ubiquitin-protein ligase involved in DNA damage response by promoting DNA resection and homologous recombination. Recruited to sites of double-strand breaks following DNA damage and specifically promotes double-strand break repair via homologous recombination. Together with nlk.2, involved in the ubiquitination and degradation of TCF/LEF. Also exhibits auto-ubiquitination activity in combination with ube2k. May act as a negative regulator in the Wnt/beta-catenin-mediated signaling pathway. This chain is E3 ubiquitin-protein ligase RNF138 (rnf138), found in Xenopus laevis (African clawed frog).